Here is a 478-residue protein sequence, read N- to C-terminus: Chromosomal replication initiator protein DnaA (478 aa).

The segment at 1–71 (MNLTHIWKTT…RNALTRVVGY (71 aa)) is domain I, interacts with DnaA modulators. The interval 71-136 (YPVQVQVLIA…LDLASAMRSG (66 aa)) is domain II. The segment at 137–353 (MLNPRYTFAS…GSLNRVAAYA (217 aa)) is domain III, AAA+ region. 4 residues coordinate ATP: Gly181, Gly183, Lys184, and Thr185. The interval 354–478 (ELNRLPITID…RERIQMMRGL (125 aa)) is domain IV, binds dsDNA.

This sequence belongs to the DnaA family. Oligomerizes as a right-handed, spiral filament on DNA at oriC.

The protein resides in the cytoplasm. Its function is as follows. Plays an essential role in the initiation and regulation of chromosomal replication. ATP-DnaA binds to the origin of replication (oriC) to initiate formation of the DNA replication initiation complex once per cell cycle. Binds the DnaA box (a 9 base pair repeat at the origin) and separates the double-stranded (ds)DNA. Forms a right-handed helical filament on oriC DNA; dsDNA binds to the exterior of the filament while single-stranded (ss)DNA is stabiized in the filament's interior. The ATP-DnaA-oriC complex binds and stabilizes one strand of the AT-rich DNA unwinding element (DUE), permitting loading of DNA polymerase. After initiation quickly degrades to an ADP-DnaA complex that is not apt for DNA replication. Binds acidic phospholipids. The chain is Chromosomal replication initiator protein DnaA from Chloroflexus aggregans (strain MD-66 / DSM 9485).